The chain runs to 320 residues: Acetyl-coenzyme A carboxylase carboxyl transferase subunit alpha (320 aa).

In terms of domain architecture, CoA carboxyltransferase C-terminal spans arginine 41–glutamate 295.

Belongs to the AccA family. In terms of assembly, acetyl-CoA carboxylase is a heterohexamer composed of biotin carboxyl carrier protein (AccB), biotin carboxylase (AccC) and two subunits each of ACCase subunit alpha (AccA) and ACCase subunit beta (AccD).

Its subcellular location is the cytoplasm. The catalysed reaction is N(6)-carboxybiotinyl-L-lysyl-[protein] + acetyl-CoA = N(6)-biotinyl-L-lysyl-[protein] + malonyl-CoA. It participates in lipid metabolism; malonyl-CoA biosynthesis; malonyl-CoA from acetyl-CoA: step 1/1. In terms of biological role, component of the acetyl coenzyme A carboxylase (ACC) complex. First, biotin carboxylase catalyzes the carboxylation of biotin on its carrier protein (BCCP) and then the CO(2) group is transferred by the carboxyltransferase to acetyl-CoA to form malonyl-CoA. The protein is Acetyl-coenzyme A carboxylase carboxyl transferase subunit alpha of Bradyrhizobium sp. (strain ORS 278).